The primary structure comprises 980 residues: Valine--tRNA ligase (980 aa).

Positions 43-53 (PNVTGTLHMGH) match the 'HIGH' region motif. The 'KMSKS' region motif lies at 586-590 (KMSKS). Lys589 contributes to the ATP binding site. Residues 914-980 (LVDMDAERMR…AGLREQRGKL (67 aa)) are a coiled coil.

It belongs to the class-I aminoacyl-tRNA synthetase family. ValS type 1 subfamily. As to quaternary structure, monomer.

It localises to the cytoplasm. It catalyses the reaction tRNA(Val) + L-valine + ATP = L-valyl-tRNA(Val) + AMP + diphosphate. In terms of biological role, catalyzes the attachment of valine to tRNA(Val). As ValRS can inadvertently accommodate and process structurally similar amino acids such as threonine, to avoid such errors, it has a 'posttransfer' editing activity that hydrolyzes mischarged Thr-tRNA(Val) in a tRNA-dependent manner. This chain is Valine--tRNA ligase, found in Xanthomonas oryzae pv. oryzae (strain PXO99A).